Reading from the N-terminus, the 255-residue chain is uncharacterized protein (255 aa).

The 69-residue stretch at 4-72 (DPYSVLGVEK…KRRKHYDKTG (69 aa)) folds into the J domain. Composition is skewed to basic residues over residues 167–178 (FAPNEKKRKRRA) and 243–255 (TKPKKSKKSRSKE). 2 disordered regions span residues 167–215 (FAPN…EEAL) and 230–255 (LISNLESKYSKSSTKPKKSKKSRSKE).

It belongs to the DnaJ family.

The protein localises to the nucleus. The protein resides in the nucleolus. This is an uncharacterized protein from Schizosaccharomyces pombe (strain 972 / ATCC 24843) (Fission yeast).